The sequence spans 461 residues: tRNA(Ile)-lysidine synthase (461 aa).

ATP is bound at residue 26–31; that stretch reads SGGPDS.

Belongs to the tRNA(Ile)-lysidine synthase family.

It is found in the cytoplasm. The enzyme catalyses cytidine(34) in tRNA(Ile2) + L-lysine + ATP = lysidine(34) in tRNA(Ile2) + AMP + diphosphate + H(+). Its function is as follows. Ligates lysine onto the cytidine present at position 34 of the AUA codon-specific tRNA(Ile) that contains the anticodon CAU, in an ATP-dependent manner. Cytidine is converted to lysidine, thus changing the amino acid specificity of the tRNA from methionine to isoleucine. The protein is tRNA(Ile)-lysidine synthase of Clostridium acetobutylicum (strain ATCC 824 / DSM 792 / JCM 1419 / IAM 19013 / LMG 5710 / NBRC 13948 / NRRL B-527 / VKM B-1787 / 2291 / W).